The chain runs to 64 residues: Large ribosomal subunit protein bL32 (64 aa).

The disordered stretch occupies residues 1–36; it reads MAVQKSRVTPSRRGQRRSHDALSAKQLSTDPTTGEV.

Belongs to the bacterial ribosomal protein bL32 family.

The sequence is that of Large ribosomal subunit protein bL32 from Stenotrophomonas maltophilia (strain K279a).